The chain runs to 107 residues: U1-lycotoxin-Ls1l (107 aa).

An N-terminal signal peptide occupies residues 1–20 (MMKVLVVVALLVTLISYSSS). A propeptide spanning residues 21 to 41 (EGIDDLEADELLSLMANEQTR) is cleaved from the precursor. 4 cysteine pairs are disulfide-bonded: Cys44-Cys59, Cys51-Cys68, Cys58-Cys86, and Cys70-Cys84.

The protein belongs to the neurotoxin 19 (CSTX) family. 04 (U1-Lctx) subfamily. In terms of tissue distribution, expressed by the venom gland.

It localises to the secreted. In Lycosa singoriensis (Wolf spider), this protein is U1-lycotoxin-Ls1l.